The following is a 551-amino-acid chain: Glucans biosynthesis protein D (551 aa).

The segment at residues 1–32 is a signal peptide (tat-type signal); the sequence is MNRRRFIKGSMAMAAVCGSSGIASLFSQAAFA.

This sequence belongs to the OpgD/OpgG family. Post-translationally, predicted to be exported by the Tat system. The position of the signal peptide cleavage has not been experimentally proven.

It is found in the periplasm. The protein operates within glycan metabolism; osmoregulated periplasmic glucan (OPG) biosynthesis. Its function is as follows. Probably involved in the control of the structural glucose backbone of osmoregulated periplasmic glucans (OPGs). This is Glucans biosynthesis protein D from Salmonella enteritidis PT4 (strain P125109).